The following is a 575-amino-acid chain: Acetolactate synthase large subunit (575 aa).

Position 57 (E57) interacts with thiamine diphosphate. FAD contacts are provided by residues R159, 265–286 (HGSY…LGSR), and 308–327 (DIDA…ILSD). The tract at residues 395 to 475 (QHQMWVAQYY…IKVVLINNHS (81 aa)) is thiamine pyrophosphate binding. 2 residues coordinate Mg(2+): D446 and N473.

The protein belongs to the TPP enzyme family. As to quaternary structure, dimer of large and small chains. Requires Mg(2+) as cofactor. It depends on thiamine diphosphate as a cofactor.

The catalysed reaction is 2 pyruvate + H(+) = (2S)-2-acetolactate + CO2. It functions in the pathway amino-acid biosynthesis; L-isoleucine biosynthesis; L-isoleucine from 2-oxobutanoate: step 1/4. It participates in amino-acid biosynthesis; L-valine biosynthesis; L-valine from pyruvate: step 1/4. The protein is Acetolactate synthase large subunit (ilvB) of Lactococcus lactis subsp. lactis (strain IL1403) (Streptococcus lactis).